Consider the following 238-residue polypeptide: MAEPVYRRVVVKLSGEYLAGPHSFGIDQPTVDRIADDLIAVQKLGIEIAVVVGGGNMVRGVEVSSQGVSRATGDTMGMLATVMNSLALEAALQRKGAPAVALSAFVMPQVCELFTRAAAHRALAEGRIVVLGGGTGNPYFTTDTTAVLRAAEIGAQAVLKATNVDGVYSADPKKDPAAKRFDRLTHSQAIEGGYKVMDATAFALARETSLPIIVFSIAEPGAIGAMLRGEGRGTIVAG.

Residue Lys-12 to Gly-15 participates in ATP binding. Gly-54 lines the UMP pocket. ATP-binding residues include Gly-55 and Arg-59. Residues Asp-74 and Thr-135–Thr-142 each bind UMP. Residues Thr-162, Asn-163, Tyr-168, and Asp-171 each contribute to the ATP site.

The protein belongs to the UMP kinase family. Homohexamer.

Its subcellular location is the cytoplasm. The catalysed reaction is UMP + ATP = UDP + ADP. The protein operates within pyrimidine metabolism; CTP biosynthesis via de novo pathway; UDP from UMP (UMPK route): step 1/1. With respect to regulation, inhibited by UTP. Its function is as follows. Catalyzes the reversible phosphorylation of UMP to UDP. This is Uridylate kinase from Bradyrhizobium sp. (strain ORS 278).